Here is a 472-residue protein sequence, read N- to C-terminus: Mitochondrial substrate carrier family protein C (472 aa).

The Mitochondrial intermembrane portion of the chain corresponds to 1 to 189; that stretch reads MVLNENDKEF…ASSLRNTITY (189 aa). 4 consecutive EF-hand domains span residues 6–41, 42–70, 73–108, and 110–145; these read NDKE…LRIP, SSEK…FEDF, ENIK…LNIP, and YSEQ…LPNS. Ca(2+) contacts are provided by Asp-19, Asp-21, Asn-23, Lys-25, Glu-30, Asp-55, Asp-57, Asp-59, Ser-61, Glu-66, Asp-86, Asn-88, Ser-90, Thr-92, Glu-97, Asp-123, Asn-125, Asp-127, Gln-129, and Glu-134. Solcar repeat units lie at residues 184–268, 276–362, and 375–461; these read RNTI…VKKL, LTSA…LKHK, and GQLL…FKKA. Residues 190–207 traverse the membrane as a helical segment; that stretch reads MLAGSVAGFASRTSTAPL. Over 208-242 the chain is Mitochondrial matrix; the sequence is ERVKIMCQLNHGKPISLISAFKACYKDGGIKGFFR. Residues 243–263 form a helical membrane-spanning segment; the sequence is GNLANIIKVSPESAVKFGTYE. Residues 264–281 lie on the Mitochondrial intermembrane side of the membrane; that stretch reads YVKKLFAENDCELTSAQR. A helical membrane pass occupies residues 282-302; sequence FISGSVAGVVSHTTLFPLEVV. At 303–330 the chain is on the mitochondrial matrix side; sequence RLRLSAEIAGTYNGIFDCFKKIAISEKS. Residues 331 to 351 form a helical membrane-spanning segment; it reads IRPFYRGLGASITATIPHSGV. The Mitochondrial intermembrane portion of the chain corresponds to 352–377; sequence NMMVYEFLKHKVIKMTGNEFPTAGQL. A helical membrane pass occupies residues 378–398; the sequence is LVCASTSSVCGQLVGYPFHVV. The Mitochondrial matrix segment spans residues 399–441; that stretch reads KSRLITQGSSVNQEKYTGLFDGLTKIIKKEGPIGLYKGIVPSF. The helical transmembrane segment at 442–462 threads the bilayer; it reads MKSIPSHSITFIVYEGFKKAF. Topologically, residues 463-472 are mitochondrial intermembrane; that stretch reads DVNLKEKKHH.

Belongs to the mitochondrial carrier (TC 2.A.29) family.

The protein localises to the mitochondrion inner membrane. Its function is as follows. Calcium-dependent mitochondrial solute carrier. Mitochondrial solute carriers shuttle metabolites, nucleotides, and cofactors through the mitochondrial inner membrane. The sequence is that of Mitochondrial substrate carrier family protein C (mcfC) from Dictyostelium discoideum (Social amoeba).